The chain runs to 165 residues: Cysteine-rich hydrophobic domain-containing protein 2 (165 aa).

Positions 1–26 form a coiled coil; sequence MADFDEIYEEEEDEERALEEQLLKYS. Residues 88–106 carry the CHIC motif (Cys-rich) motif; the sequence is CGCLCCCCTLGCSMWPVIC.

This sequence belongs to the CHIC family. Palmitoylation in the CHIC motif is required for membrane association.

The protein localises to the cell membrane. It localises to the cytoplasmic vesicle. The protein is Cysteine-rich hydrophobic domain-containing protein 2 (CHIC2) of Homo sapiens (Human).